The primary structure comprises 179 residues: Large ribosomal subunit protein uL6 (179 aa).

The protein belongs to the universal ribosomal protein uL6 family. Part of the 50S ribosomal subunit.

This protein binds to the 23S rRNA, and is important in its secondary structure. It is located near the subunit interface in the base of the L7/L12 stalk, and near the tRNA binding site of the peptidyltransferase center. The chain is Large ribosomal subunit protein uL6 from Bacillus subtilis (strain 168).